A 311-amino-acid polypeptide reads, in one-letter code: Glutaminase (311 aa).

S69, N120, E164, N171, Y195, Y247, and V265 together coordinate substrate.

It belongs to the glutaminase family. Homotetramer.

The enzyme catalyses L-glutamine + H2O = L-glutamate + NH4(+). The chain is Glutaminase from Colwellia psychrerythraea (strain 34H / ATCC BAA-681) (Vibrio psychroerythus).